The chain runs to 754 residues: Neprilysin-1 (754 aa).

A helical; Signal-anchor for type II membrane protein membrane pass occupies residues 5-27; that stretch reads FGPPIVFLISCYALILCGTVDAL. N-linked (GlcNAc...) asparagine glycans are attached at residues N38, N81, N132, N217, N273, N303, and N441. Positions 63 to 754 constitute a Peptidase M13 domain; sequence VGDSEGYQEA…MNPTKRCVVW (692 aa). Intrachain disulfides connect C87-C739, C95-C699, C151-C414, and C624-C751. H587 contributes to the Zn(2+) binding site. E588 is a catalytic residue. H591 provides a ligand contact to Zn(2+). N612 carries an N-linked (GlcNAc...) asparagine glycan. E649 serves as a coordination point for Zn(2+). Residue D653 is the Proton donor of the active site.

It belongs to the peptidase M13 family. It depends on Zn(2+) as a cofactor. In terms of tissue distribution, specifically expressed in pharyngeal cells and a single head neuron.

It is found in the membrane. Functionally, probable cell surface protease. Required to control the neuronal innervation of pharyngeal pumping. This Caenorhabditis elegans protein is Neprilysin-1 (nep-1).